Consider the following 367-residue polypeptide: Glutamate 5-kinase (367 aa).

An ATP-binding site is contributed by K9. Residues S49, D136, and N148 each coordinate substrate. ATP-binding positions include 168-169 and 210-216; these read TD and TGGMKSK. The region spanning 276–350 is the PUA domain; the sequence is SGQIEIDAGA…GMQSQHIQAR (75 aa).

It belongs to the glutamate 5-kinase family.

The protein localises to the cytoplasm. The enzyme catalyses L-glutamate + ATP = L-glutamyl 5-phosphate + ADP. It functions in the pathway amino-acid biosynthesis; L-proline biosynthesis; L-glutamate 5-semialdehyde from L-glutamate: step 1/2. Its function is as follows. Catalyzes the transfer of a phosphate group to glutamate to form L-glutamate 5-phosphate. The chain is Glutamate 5-kinase from Bacillus cereus (strain ZK / E33L).